Reading from the N-terminus, the 1301-residue chain is MKIITYFCIWAVAWAIPVPQSKPLERHVEKSMNLHLLARSNVSVQDELNASGTIKESGVLVHEGDRGRQENTQDGHKGEGNGSKWAEVGGKSFSTYSTLANEEGNIEGWNGDTGKAETYGHDGIHGKEENITANGIQGQVSIIDNAGATNRSNTNGNTDKNTQNGDVGDAGHNEDVAVVQEDGPQVAGSNNSTDNEDEIIENSCRNEGNTSEITPQINSKRNGTKEAEVTPGTGEDAGLDNSDGSPSGNGADEDEDEGSGDDEDEEAGNGKDSSNNSKGQEGQDHGKEDDHDSSIGQNSDSKEYYDPEGKEDPHNEVDGDKTSKSEENSAGIPEDNGSQRIEDTQKLNHRESKRVENRITKESETHAVGKSQDKGIEIKGPSSGNRNITKEVGKGNEGKEDKGQHGMILGKGNVKTQGEVVNIEGPGQKSEPGNKVGHSNTGSDSNSDGYDSYDFDDKSMQGDDPNSSDESNGNDDANSESDNNSSSRGDASYNSDESKDNGNGSDSKGAEDDDSDSTSDTNNSDSNGNGNNGNDDNDKSDSGKGKSDSSDSDSSDSSNSSDSSDSSDSDSSDSNSSSDSDSSDSDSSDSSDSDSSDSSNSSDSSDSSDSSDSSDSSDSSDSKSDSSKSESDSSDSDSKSDSSDSNSSDSSDNSDSSDSSNSSNSSDSSDSSDSSDSSSSSDSSNSSDSSDSSDSSNSSESSDSSDSSDSDSSDSSDSSNSNSSDSDSSNSSDSSDSSNSSDSSDSSDSSNSSDSSDSSDSSNSSDSSDSSDSSDSSDSSNSSDSNDSSNSSDSSDSSNSSDSSNSSDSSDSSDSSDSDSSNSSDSSNSSDSSDSSNSSDSSDSSDSSDGSDSDSSNRSDSSNSSDSSDSSDSSNSSDSSDSSDSNESSNSSDSSDSSNSSDSDSSDSSNSSDSSDSSNSSDSSESSNSSDNSNSSDSSNSSDSSDSSDSSNSSDSSNSSDSSNSSDSSDSNSSDSSDSSNSSDSSDSSDSSDSSDSSDSSNSSDSSDSSDSSDSSNSSDSSNSSDSSNSSDSSDSSDSSDSSDSSDSSDSSDSSNSSDSSDSSDSSDSSDSSDSSDSSDSSESSDSSDSSNSSDSSDSSDSSDSSDSSDSSDSSDSSDSSNSSDSSDSSDSSDSSDSSNSSDSSDSSESSDSSDSSDSSDSSDSSDSSDSSDSSDSSNSSDSSDSSDSSDSSDSSDSSDSSDSSDSSDSSDSSDSSDSSDSSDSSDSSDSNESSDSSDSSDSSDSSNSSDSSDSSDSSDSTSDSNDESDSQSKSGNGNNNGSDSDSDSEGSDSNHSTSDD.

Positions 1-15 (MKIITYFCIWAVAWA) are cleaved as a signal peptide. 2 N-linked (GlcNAc...) asparagine glycosylation sites follow: asparagine 41 and asparagine 49. A disordered region spans residues 55–89 (KESGVLVHEGDRGRQENTQDGHKGEGNGSKWAEVG). Over residues 62 to 79 (HEGDRGRQENTQDGHKGE) the composition is skewed to basic and acidic residues. N-linked (GlcNAc...) asparagine glycans are attached at residues asparagine 81, asparagine 130, asparagine 150, asparagine 190, asparagine 191, asparagine 209, and asparagine 222. The segment covering 146 to 165 (AGATNRSNTNGNTDKNTQNG) has biased composition (polar residues). Residues 146–171 (AGATNRSNTNGNTDKNTQNGDVGDAG) form a disordered region. The tract at residues 202–1301 (NSCRNEGNTS…SDSNHSTSDD (1100 aa)) is disordered. The span at 203–221 (SCRNEGNTSEITPQINSKR) shows a compositional bias: polar residues. The span at 251–267 (ADEDEDEGSGDDEDEEA) shows a compositional bias: acidic residues. Serine 259 carries the phosphoserine; by CK1 modification. Polar residues predominate over residues 271–280 (KDSSNNSKGQ). N-linked (GlcNAc...) asparagine glycosylation is present at asparagine 275. Basic and acidic residues-rich tracts occupy residues 281-293 (EGQDHGKEDDHDS) and 300-327 (DSKEYYDPEGKEDPHNEVDGDKTSKSEE). Serine 301 bears the Phosphoserine mark. Asparagine 336 carries an N-linked (GlcNAc...) asparagine glycan. Basic and acidic residues predominate over residues 340–377 (RIEDTQKLNHRESKRVENRITKESETHAVGKSQDKGIE). N-linked (GlcNAc...) asparagine glycosylation occurs at asparagine 387. Positions 388-404 (ITKEVGKGNEGKEDKGQ) are enriched in basic and acidic residues. 2 stretches are compositionally biased toward low complexity: residues 439-452 (SNTGSDSNSDGYDS) and 462-487 (GDDPNSSDESNGNDDANSESDNNSSS). Positions 488 to 490 (RGD) match the Cell attachment site motif. Over residues 488–506 (RGDASYNSDESKDNGNGSD) the composition is skewed to polar residues. Positions 518–534 (TSDTNNSDSNGNGNNGN) are enriched in low complexity. A compositionally biased stretch (basic and acidic residues) spans 536–549 (DNDKSDSGKGKSDS). Residues 555-564 (SDSSNSSDSS) are compositionally biased toward low complexity. Positions 581-595 (DSSDSDSSDSSDSDS) are enriched in acidic residues. The segment covering 596–619 (SDSSNSSDSSDSSDSSDSSDSSDS) has biased composition (low complexity). Basic and acidic residues predominate over residues 620-642 (SDSKSDSSKSESDSSDSDSKSDS). Low complexity-rich tracts occupy residues 643 to 705 (SDSN…SDSS), 715 to 1264 (SSDS…STSD), 1272 to 1284 (QSKSGNGNNNGSD), and 1292 to 1301 (SDSNHSTSDD).

Interacts with FBLN7. In terms of processing, DSP is glycosylated. As to expression, expressed in teeth. DPP is synthesized by odontoblast and transiently expressed by pre-ameloblasts.

Its subcellular location is the secreted. It localises to the extracellular space. The protein localises to the extracellular matrix. In terms of biological role, DSP may be an important factor in dentinogenesis. DPP may bind high amount of calcium and facilitate initial mineralization of dentin matrix collagen as well as regulate the size and shape of the crystals. The sequence is that of Dentin sialophosphoprotein (DSPP) from Homo sapiens (Human).